The chain runs to 379 residues: Carbamoyl phosphate synthase small chain (379 aa).

The tract at residues 1–184 (MVSLYLENGL…LDYKPFDEKN (184 aa)) is CPSase. Positions 44, 240, and 242 each coordinate L-glutamine. In terms of domain architecture, Glutamine amidotransferase type-1 spans 188–378 (TIAVLDFGAK…VKLLENFPTR (191 aa)). Residue C268 is the Nucleophile of the active site. The L-glutamine site is built by L269, Q272, N310, and Y313. Active-site residues include H351 and E353.

The protein belongs to the CarA family. As to quaternary structure, composed of two chains; the small (or glutamine) chain promotes the hydrolysis of glutamine to ammonia, which is used by the large (or ammonia) chain to synthesize carbamoyl phosphate. Tetramer of heterodimers (alpha,beta)4.

The catalysed reaction is hydrogencarbonate + L-glutamine + 2 ATP + H2O = carbamoyl phosphate + L-glutamate + 2 ADP + phosphate + 2 H(+). It catalyses the reaction L-glutamine + H2O = L-glutamate + NH4(+). Its pathway is amino-acid biosynthesis; L-arginine biosynthesis; carbamoyl phosphate from bicarbonate: step 1/1. It participates in pyrimidine metabolism; UMP biosynthesis via de novo pathway; (S)-dihydroorotate from bicarbonate: step 1/3. Its function is as follows. Small subunit of the glutamine-dependent carbamoyl phosphate synthetase (CPSase). CPSase catalyzes the formation of carbamoyl phosphate from the ammonia moiety of glutamine, carbonate, and phosphate donated by ATP, constituting the first step of 2 biosynthetic pathways, one leading to arginine and/or urea and the other to pyrimidine nucleotides. The small subunit (glutamine amidotransferase) binds and cleaves glutamine to supply the large subunit with the substrate ammonia. The sequence is that of Carbamoyl phosphate synthase small chain from Helicobacter acinonychis (strain Sheeba).